The sequence spans 430 residues: MGKISKAVRGVADIYNGASLIVRIIVGLIIGTVLALTMPHVTWIGEFGTLFVAALKAAAPILVFVLVASALAQGTSKLDRRFGTVLFLYLFTTFLAAVVAVLTSRLFPQTLSLGKAAKADVVPQGLSEVIQTLLTNIVANPIQAIIDGNYICILMWACLFGLAMKSIANESSKAFMANVADAVSQVIRWVINLAPFGIMGLVFTNVADNGLSAFTKYGSLLLLLVGTMLLMVLVFGPLVIFIFLRRNPYPLVYRCFKESGLTAFFTRSSAANIPVNMQLCEKLGLDKDMYSVSIPLGATINMNGAAITITIMAMAAANTLGIQISLPAAILLSVVSALGACGASGVAGGSLLLIPMACSLFGISNDIAMQVVGVGFIIGVIQDSVETCLNSASDVEFAATAEYHAWLKQGRQLPAFMYSKKERAKLGIEA.

The next 9 helical transmembrane spans lie at 24-44 (IIVG…VTWI), 47-67 (FGTL…FVLV), 82-102 (FGTV…VAVL), 144-164 (AIID…GLAM), 186-206 (VIRW…FTNV), 223-243 (LLVG…IFIF), 294-314 (IPLG…IMAM), 320-340 (LGIQ…ALGA), and 361-381 (FGIS…IGVI).

This sequence belongs to the dicarboxylate/amino acid:cation symporter (DAACS) (TC 2.A.23) family.

It is found in the cell membrane. It carries out the reaction L-serine(in) + Na(+)(in) = L-serine(out) + Na(+)(out). The catalysed reaction is L-threonine(in) + Na(+)(in) = L-threonine(out) + Na(+)(out). Involved in the import of serine and threonine into the cell, with the concomitant import of sodium (symport system). In Bifidobacterium adolescentis (strain ATCC 15703 / DSM 20083 / NCTC 11814 / E194a), this protein is Serine/threonine transporter SstT.